Reading from the N-terminus, the 564-residue chain is Sphingomyelin phosphodiesterase 1 (564 aa).

Positions 1-17 are cleaved as a signal peptide; that stretch reads MRIIYLISTVLLIYTNA. Positions 37 to 121 constitute a Saposin B-type domain; sequence FQPLCISCTG…IILPDCADPT (85 aa). 3 disulfides stabilise this stretch: cysteine 41/cysteine 117, cysteine 44/cysteine 110, and cysteine 72/cysteine 83. Asparagine 151 is a glycosylation site (N-linked (GlcNAc...) asparagine). Residues aspartate 165 and histidine 167 each coordinate Zn(2+). Cystine bridges form between cysteine 180–cysteine 185 and cysteine 186–cysteine 206. Asparagine 221 carries an N-linked (GlcNAc...) asparagine glycan. Zn(2+) is bound by residues aspartate 234 and asparagine 274. An intrachain disulfide couples cysteine 341 to cysteine 389. The N-linked (GlcNAc...) asparagine glycan is linked to asparagine 351. The Zn(2+) site is built by histidine 381, histidine 415, and histidine 417. The N-linked (GlcNAc...) asparagine glycan is linked to asparagine 430. 2 disulfide bridges follow: cysteine 538/cysteine 542 and cysteine 548/cysteine 561. N-linked (GlcNAc...) asparagine glycosylation occurs at asparagine 556.

The protein belongs to the acid sphingomyelinase family. The cofactor is Zn(2+).

It localises to the secreted. It catalyses the reaction a sphingomyelin + H2O = phosphocholine + an N-acylsphing-4-enine + H(+). The catalysed reaction is an N-acyl-15-methylhexadecasphing-4-enine-1-phosphocholine + H2O = an N-acyl-15-methylhexadecasphing-4-enine + phosphocholine + H(+). It functions in the pathway lipid metabolism; sphingolipid metabolism. Sphingomyelin phosphodiesterase (sphingomyelinase) that converts sphingomyelin to ceramide (N-acyl-sphingoid base) and phosphocholine at acidic pH. Displays its enzymatic activity when secreted. May play distinct roles in signaling. The chain is Sphingomyelin phosphodiesterase 1 (asm-1) from Caenorhabditis elegans.